The sequence spans 325 residues: Electron transfer flavoprotein subunit alpha (325 aa).

FAD is bound at residue Leu-262–Asp-290.

Belongs to the ETF alpha-subunit/FixB family. As to quaternary structure, heterodimer of an alpha and a beta subunit. FAD serves as cofactor.

The electron transfer flavoprotein serves as a specific electron acceptor for other dehydrogenases. It transfers the electrons to the main respiratory chain via ETF-ubiquinone oxidoreductase (ETF dehydrogenase). This chain is Electron transfer flavoprotein subunit alpha (etfA), found in Bacillus subtilis (strain 168).